The primary structure comprises 65 residues: Myosin-11 (65 aa).

Positions arginine 1 to lysine 65 constitute a Myosin motor domain.

It belongs to the TRAFAC class myosin-kinesin ATPase superfamily. Myosin family. In terms of assembly, muscle myosin is a hexameric protein that consists of 2 heavy chain subunits (MHC), 2 alkali light chain subunits (MLC) and 2 regulatory light chain subunits (MLC-2).

The protein resides in the melanosome. The protein localises to the cytoplasm. It is found in the myofibril. Its function is as follows. Muscle contraction. In Sus scrofa (Pig), this protein is Myosin-11 (MYH11).